The sequence spans 417 residues: Delta-aminolevulinic acid dehydratase, chloroplastic (417 aa).

Residues 1–40 constitute a chloroplast transit peptide; that stretch reads MAALLVPGGGAAPGLVWRRRRAAVQCAAASPSSPDPSWRT. Residues 63-92 form a disordered region; sequence VVSGNPPAAPAAPAKAKAPPGTPVVKPLRL. Residue K286 is the Schiff-base intermediate with substrate of the active site. Positions 296 and 308 each coordinate 5-aminolevulinate. E324 contacts Mg(2+). The active-site Schiff-base intermediate with substrate is K339. 5-aminolevulinate is bound by residues S365 and Y404.

It belongs to the ALAD family. In terms of assembly, homooctamer. Mg(2+) is required as a cofactor.

It is found in the plastid. Its subcellular location is the chloroplast. The enzyme catalyses 2 5-aminolevulinate = porphobilinogen + 2 H2O + H(+). Its pathway is porphyrin-containing compound metabolism; protoporphyrin-IX biosynthesis; coproporphyrinogen-III from 5-aminolevulinate: step 1/4. Catalyzes an early step in the biosynthesis of tetrapyrroles. Binds two molecules of 5-aminolevulinate per subunit, each at a distinct site, and catalyzes their condensation to form porphobilinogen. This Selaginella martensii (Martens's spike moss) protein is Delta-aminolevulinic acid dehydratase, chloroplastic (HEMB).